Reading from the N-terminus, the 187-residue chain is Avirulence protein ATR39-2 (187 aa).

The N-terminal stretch at 1–20 (MVKCTPLLALTVIVSAGSDA) is a signal peptide. The RxLR-dEER motif lies at 49–66 (RVLRASDVPNEVAAGESR).

Belongs to the RxLR effector family.

It is found in the secreted. Its subcellular location is the host cell. Secreted effector that acts as an elicitor of hypersensitive response (HR) specifically on plants carrying defense protein RPP39. The allele ATR39-1 is recognized by RPP39, whereas the ATR39-2 allele is nor recognized. The chain is Avirulence protein ATR39-2 from Hyaloperonospora arabidopsidis (strain Emoy2) (Downy mildew agent).